The primary structure comprises 511 residues: Cytochrome P450 monooxygenase PUL2 (511 aa).

Residues 14–34 form a helical membrane-spanning segment; sequence WMAFVYFTPVLFVVLYLLKEW. N-linked (GlcNAc...) asparagine glycans are attached at residues N116, N141, and N442. C462 contacts heme.

The protein belongs to the cytochrome P450 family. It depends on heme as a cofactor.

It is found in the membrane. It participates in siderophore biosynthesis. In terms of biological role, cytochrome P450 monooxygenase; part of the PUL gene cluster that mediates the formation of pulcherrimin, a red iron-containing pigment composed of two cyclized and modified leucine molecules that acts as a siderophore, a chelator that binds iron outside the cell for subsequent uptake. Two leucine molecules are cyclized via a cyclodipeptide synthase, and the resulting diketopiperazine is oxidized by a cytochrome P450 monooxygenase to generate pulcherriminic acid (PA), which can then spontaneously bind iron to form pulcherrimin. The probable cyclodipeptide synthase PUL1 and the cytochrome P450 monooxygenase PUL2 encode the enzymes responsible for the two-step pulcherrimin biosynthesis pathway. In Kluyveromyces lactis (strain ATCC 8585 / CBS 2359 / DSM 70799 / NBRC 1267 / NRRL Y-1140 / WM37) (Yeast), this protein is Cytochrome P450 monooxygenase PUL2.